The following is a 1404-amino-acid chain: DNA-directed RNA polymerase subunit beta' (1404 aa).

Cysteine 72, cysteine 74, cysteine 87, and cysteine 90 together coordinate Zn(2+). Residues aspartate 462, aspartate 464, and aspartate 466 each contribute to the Mg(2+) site. Zn(2+) contacts are provided by cysteine 816, cysteine 890, cysteine 897, and cysteine 900.

The protein belongs to the RNA polymerase beta' chain family. In terms of assembly, the RNAP catalytic core consists of 2 alpha, 1 beta, 1 beta' and 1 omega subunit. When a sigma factor is associated with the core the holoenzyme is formed, which can initiate transcription. Mg(2+) is required as a cofactor. Requires Zn(2+) as cofactor.

It carries out the reaction RNA(n) + a ribonucleoside 5'-triphosphate = RNA(n+1) + diphosphate. Functionally, DNA-dependent RNA polymerase catalyzes the transcription of DNA into RNA using the four ribonucleoside triphosphates as substrates. The protein is DNA-directed RNA polymerase subunit beta' of Azoarcus sp. (strain BH72).